The following is a 181-amino-acid chain: MGRTTSSPKAMMRIATVAAILTILASTCMARNVLTNGEGLYAGQSLDVEQYKFIMQDDCNLVLYEYSTPIWASNTGVTGKNGCRAVMQRDGNFVVYDVNGRPVWASNSVRGNGNYILVLQKDRNVVIYGSDIWSTGTYRRSVGGAVVMAMNGTVDGGSVIGPVVVNQNVTAAIRKVGTGAA.

An N-terminal signal peptide occupies residues 1–30; the sequence is MGRTTSSPKAMMRIATVAAILTILASTCMA. The region spanning 31–140 is the Bulb-type lectin domain; that stretch reads RNVLTNGEGL…DIWSTGTYRR (110 aa). The alpha-D-mannopyranose site is built by Q56, D58, N60, Y64, W71, A72, N74, Q88, D90, N92, Y96, V103, W104, N107, N114, Q120, D122, N124, Y128, and W133. A disulfide bond links C59 and C83.

As to quaternary structure, homodimer.

The protein resides in the secreted. In terms of biological role, mannose-specific lectin. Shows agglutinating activity towards rabbit erythrocytes. However, it does not show agglutinating activity towards human erythrocytes. Has insecticidal activity against the cotton leafworm S.littoralis and the peach potato aphid M.persicae. Also displays antiviral activity and therefore may contribute to defense against infections. This chain is Mannose-specific lectin, found in Allium sativum (Garlic).